The following is a 159-amino-acid chain: Transmembrane protein 42 (159 aa).

The next 4 membrane-spanning stretches (helical) occupy residues 37–57 (FWGV…AASA), 59–79 (LAFG…VMAS), 100–120 (IASV…GYVL), and 124–144 (CQEV…TLIH).

It localises to the membrane. The protein is Transmembrane protein 42 (TMEM42) of Pongo abelii (Sumatran orangutan).